The primary structure comprises 295 residues: Glutamyl-Q tRNA(Asp) synthetase (295 aa).

L-glutamate-binding positions include Arg-5–Ser-9 and Glu-41. The short motif at Pro-8 to Ser-18 is the 'HIGH' region element. Residues Cys-97, Cys-99, Tyr-117, and Cys-121 each coordinate Zn(2+). L-glutamate contacts are provided by Tyr-178 and Arg-196. The 'KMSKS' region signature appears at Lys-234–Gln-238. Lys-237 is an ATP binding site.

This sequence belongs to the class-I aminoacyl-tRNA synthetase family. GluQ subfamily. It depends on Zn(2+) as a cofactor.

Catalyzes the tRNA-independent activation of glutamate in presence of ATP and the subsequent transfer of glutamate onto a tRNA(Asp). Glutamate is transferred on the 2-amino-5-(4,5-dihydroxy-2-cyclopenten-1-yl) moiety of the queuosine in the wobble position of the QUC anticodon. This Neisseria meningitidis serogroup B (strain ATCC BAA-335 / MC58) protein is Glutamyl-Q tRNA(Asp) synthetase.